The chain runs to 180 residues: NAD(P)H-quinone oxidoreductase subunit 6, chloroplastic (180 aa).

5 helical membrane-spanning segments follow: residues 10–30 (ILLVPLELGLILGGLEVVLLT), 32–52 (IIYSALSLGPVLVCISLLYIL), 57–77 (FVAAAQILIYVGAVNVLIVFA), 95–115 (VGDGITLVVCTSLFCSLITII), and 153–173 (FLPFELLSIILLVALVGAITI).

Belongs to the complex I subunit 6 family. In terms of assembly, NDH is composed of at least 16 different subunits, 5 of which are encoded in the nucleus.

It is found in the plastid. It localises to the chloroplast thylakoid membrane. The enzyme catalyses a plastoquinone + NADH + (n+1) H(+)(in) = a plastoquinol + NAD(+) + n H(+)(out). It catalyses the reaction a plastoquinone + NADPH + (n+1) H(+)(in) = a plastoquinol + NADP(+) + n H(+)(out). NDH shuttles electrons from NAD(P)H:plastoquinone, via FMN and iron-sulfur (Fe-S) centers, to quinones in the photosynthetic chain and possibly in a chloroplast respiratory chain. The immediate electron acceptor for the enzyme in this species is believed to be plastoquinone. Couples the redox reaction to proton translocation, and thus conserves the redox energy in a proton gradient. The sequence is that of NAD(P)H-quinone oxidoreductase subunit 6, chloroplastic (ndhG) from Cycas taitungensis (Prince sago).